A 238-amino-acid polypeptide reads, in one-letter code: MKFSLSVALSLAAATAQAATQFCDQWGSVTEGNYILYNNLWGQAQATSGSQCTTFESLSGNTIVWNTKWSWSGGQGQVKSFANAALQFTPKKLSSVKSIDSTWTWNYSGSNIVADVAYDMFLSTSPGGDHNYEIMVWLGALGGAGPISSTGSPIATPTVAGIKFNLYLGPNGSMQVYSFVAQSTTKSFSGDMRDFFTYLEGNQGLSSDLYLVDVQAGTEPFSGSNAVFTVSDYSVSVA.

A signal peptide spans 1–18 (MKFSLSVALSLAAATAQA). N-linked (GlcNAc...) asparagine glycosylation is found at asparagine 106 and asparagine 171.

The protein belongs to the glycosyl hydrolase 12 (cellulase H) family.

The protein localises to the secreted. The catalysed reaction is xyloglucan + H2O = xyloglucan oligosaccharides.. In terms of biological role, catalyzes endohydrolysis of 1,4-beta-D-glucosidic linkages in xyloglucan with retention of the beta-configuration of the glycosyl residues. Specific for xyloglucan and does not hydrolyze other cell wall components. The sequence is that of Probable xyloglucan-specific endo-beta-1,4-glucanase A (xgeA) from Neosartorya fischeri (strain ATCC 1020 / DSM 3700 / CBS 544.65 / FGSC A1164 / JCM 1740 / NRRL 181 / WB 181) (Aspergillus fischerianus).